Reading from the N-terminus, the 159-residue chain is Cyclic pyranopterin monophosphate synthase (159 aa).

Substrate-binding positions include 75 to 77 and 113 to 114; these read LCH and ME. D128 is an active-site residue.

This sequence belongs to the MoaC family. Homohexamer; trimer of dimers.

The enzyme catalyses (8S)-3',8-cyclo-7,8-dihydroguanosine 5'-triphosphate = cyclic pyranopterin phosphate + diphosphate. It participates in cofactor biosynthesis; molybdopterin biosynthesis. Functionally, catalyzes the conversion of (8S)-3',8-cyclo-7,8-dihydroguanosine 5'-triphosphate to cyclic pyranopterin monophosphate (cPMP). This Yersinia pseudotuberculosis serotype O:3 (strain YPIII) protein is Cyclic pyranopterin monophosphate synthase.